The following is a 214-amino-acid chain: Adenylate kinase (214 aa).

14 to 19 (GSGKGT) is an ATP binding site. The NMP stretch occupies residues 32 to 61 (SVGKVLRTVMESNTAEADVVKKFIKSGKLV). AMP contacts are provided by residues Arg38, 59–61 (KLV), 87–90 (GYPR), and Gln94. An LID region spans residues 124-162 (GRISCTDCGTIYNKLYCMPKINGVCDICNSSSFQNRVDD). ATP is bound at residue Arg125. The Zn(2+) site is built by Cys128 and Cys131. 134–135 (IY) is an ATP binding site. Residues Cys148 and Cys151 each coordinate Zn(2+). Arg159 and Arg170 together coordinate AMP. Gln198 is an ATP binding site.

This sequence belongs to the adenylate kinase family. In terms of assembly, monomer.

It localises to the cytoplasm. It carries out the reaction AMP + ATP = 2 ADP. It participates in purine metabolism; AMP biosynthesis via salvage pathway; AMP from ADP: step 1/1. Its function is as follows. Catalyzes the reversible transfer of the terminal phosphate group between ATP and AMP. Plays an important role in cellular energy homeostasis and in adenine nucleotide metabolism. The sequence is that of Adenylate kinase from Orientia tsutsugamushi (strain Ikeda) (Rickettsia tsutsugamushi).